We begin with the raw amino-acid sequence, 166 residues long: Crossover junction endodeoxyribonuclease RuvC (166 aa).

Active-site residues include aspartate 9, glutamate 70, and aspartate 144. Aspartate 9, glutamate 70, and aspartate 144 together coordinate Mg(2+).

This sequence belongs to the RuvC family. In terms of assembly, homodimer which binds Holliday junction (HJ) DNA. The HJ becomes 2-fold symmetrical on binding to RuvC with unstacked arms; it has a different conformation from HJ DNA in complex with RuvA. In the full resolvosome a probable DNA-RuvA(4)-RuvB(12)-RuvC(2) complex forms which resolves the HJ. The cofactor is Mg(2+).

The protein localises to the cytoplasm. The catalysed reaction is Endonucleolytic cleavage at a junction such as a reciprocal single-stranded crossover between two homologous DNA duplexes (Holliday junction).. The RuvA-RuvB-RuvC complex processes Holliday junction (HJ) DNA during genetic recombination and DNA repair. Endonuclease that resolves HJ intermediates. Cleaves cruciform DNA by making single-stranded nicks across the HJ at symmetrical positions within the homologous arms, yielding a 5'-phosphate and a 3'-hydroxyl group; requires a central core of homology in the junction. The consensus cleavage sequence is 5'-(A/T)TT(C/G)-3'. Cleavage occurs on the 3'-side of the TT dinucleotide at the point of strand exchange. HJ branch migration catalyzed by RuvA-RuvB allows RuvC to scan DNA until it finds its consensus sequence, where it cleaves and resolves the cruciform DNA. This is Crossover junction endodeoxyribonuclease RuvC from Neorickettsia sennetsu (strain ATCC VR-367 / Miyayama) (Ehrlichia sennetsu).